Here is a 441-residue protein sequence, read N- to C-terminus: Amino-acid acetyltransferase (441 aa).

The N-acetyltransferase domain maps to Glu295–Ser434.

This sequence belongs to the acetyltransferase family. ArgA subfamily. In terms of assembly, homohexamer.

The protein localises to the cytoplasm. It catalyses the reaction L-glutamate + acetyl-CoA = N-acetyl-L-glutamate + CoA + H(+). Its pathway is amino-acid biosynthesis; L-arginine biosynthesis; N(2)-acetyl-L-ornithine from L-glutamate: step 1/4. This is Amino-acid acetyltransferase from Pectobacterium atrosepticum (strain SCRI 1043 / ATCC BAA-672) (Erwinia carotovora subsp. atroseptica).